The primary structure comprises 227 residues: Cytochrome c oxidase subunit 2 (227 aa).

At 1–14 the chain is on the mitochondrial intermembrane side; sequence MAYPMQLGLQDATS. A helical membrane pass occupies residues 15-45; that stretch reads PIMEELLHFHDHTLMIVFLISSLVLYIISLM. Topologically, residues 46 to 59 are mitochondrial matrix; sequence LTTKLTHTSTMDAQ. A helical membrane pass occupies residues 60 to 87; the sequence is EVETIWTILPAIILIMIALPSLRILYMM. The Mitochondrial intermembrane portion of the chain corresponds to 88–227; it reads DEINNPSLTV…HFEKWSASML (140 aa). Cu cation contacts are provided by H161, C196, E198, C200, H204, and M207. Residue E198 participates in Mg(2+) binding.

The protein belongs to the cytochrome c oxidase subunit 2 family. As to quaternary structure, component of the cytochrome c oxidase (complex IV, CIV), a multisubunit enzyme composed of 14 subunits. The complex is composed of a catalytic core of 3 subunits MT-CO1, MT-CO2 and MT-CO3, encoded in the mitochondrial DNA, and 11 supernumerary subunits COX4I, COX5A, COX5B, COX6A, COX6B, COX6C, COX7A, COX7B, COX7C, COX8 and NDUFA4, which are encoded in the nuclear genome. The complex exists as a monomer or a dimer and forms supercomplexes (SCs) in the inner mitochondrial membrane with NADH-ubiquinone oxidoreductase (complex I, CI) and ubiquinol-cytochrome c oxidoreductase (cytochrome b-c1 complex, complex III, CIII), resulting in different assemblies (supercomplex SCI(1)III(2)IV(1) and megacomplex MCI(2)III(2)IV(2)). Found in a complex with TMEM177, COA6, COX18, COX20, SCO1 and SCO2. Interacts with TMEM177 in a COX20-dependent manner. Interacts with COX20. Interacts with COX16. The cofactor is Cu cation.

The protein resides in the mitochondrion inner membrane. The enzyme catalyses 4 Fe(II)-[cytochrome c] + O2 + 8 H(+)(in) = 4 Fe(III)-[cytochrome c] + 2 H2O + 4 H(+)(out). Functionally, component of the cytochrome c oxidase, the last enzyme in the mitochondrial electron transport chain which drives oxidative phosphorylation. The respiratory chain contains 3 multisubunit complexes succinate dehydrogenase (complex II, CII), ubiquinol-cytochrome c oxidoreductase (cytochrome b-c1 complex, complex III, CIII) and cytochrome c oxidase (complex IV, CIV), that cooperate to transfer electrons derived from NADH and succinate to molecular oxygen, creating an electrochemical gradient over the inner membrane that drives transmembrane transport and the ATP synthase. Cytochrome c oxidase is the component of the respiratory chain that catalyzes the reduction of oxygen to water. Electrons originating from reduced cytochrome c in the intermembrane space (IMS) are transferred via the dinuclear copper A center (CU(A)) of subunit 2 and heme A of subunit 1 to the active site in subunit 1, a binuclear center (BNC) formed by heme A3 and copper B (CU(B)). The BNC reduces molecular oxygen to 2 water molecules using 4 electrons from cytochrome c in the IMS and 4 protons from the mitochondrial matrix. In Damaliscus pygargus phillipsi (Blesbok), this protein is Cytochrome c oxidase subunit 2 (MT-CO2).